The following is a 62-amino-acid chain: Photosystem II reaction center protein Z (62 aa).

A run of 2 helical transmembrane segments spans residues 8–28 and 41–61; these read TLLA…VLLA and FSGS…NSFV.

Belongs to the PsbZ family. PSII is composed of 1 copy each of membrane proteins PsbA, PsbB, PsbC, PsbD, PsbE, PsbF, PsbH, PsbI, PsbJ, PsbK, PsbL, PsbM, PsbT, PsbY, PsbZ, Psb30/Ycf12, at least 3 peripheral proteins of the oxygen-evolving complex and a large number of cofactors. It forms dimeric complexes.

The protein resides in the plastid. The protein localises to the chloroplast thylakoid membrane. Functionally, may control the interaction of photosystem II (PSII) cores with the light-harvesting antenna, regulates electron flow through the 2 photosystem reaction centers. PSII is a light-driven water plastoquinone oxidoreductase, using light energy to abstract electrons from H(2)O, generating a proton gradient subsequently used for ATP formation. The protein is Photosystem II reaction center protein Z of Ostreococcus tauri.